A 505-amino-acid chain; its full sequence is Apolipoprotein N-acyltransferase (505 aa).

Helical transmembrane passes span 26–46 (FAPYQLWPIAILSPAILLILL), 66–86 (FATGVSWVYVSISGFGGMPLI), 89–109 (LFLMGMLIAYLAVYSGLFAWL), 129–149 (LWLITDWLRGWVMTGFPWLWL), 161–181 (FAPIGGVELLTLFVLISAGAL), and 186–206 (IHKQWLMIIIPVVLMSAGFGI). The CN hydrolase domain occupies 225 to 471 (IQGNVDQNLK…TAVLRAELTP (247 aa)). E264 functions as the Proton acceptor in the catalytic mechanism. K330 is a catalytic residue. C382 serves as the catalytic Nucleophile. Residues 481 to 501 (FGTWPLYFWVALSLMLAWWLP) form a helical membrane-spanning segment.

It belongs to the CN hydrolase family. Apolipoprotein N-acyltransferase subfamily.

It is found in the cell inner membrane. It catalyses the reaction N-terminal S-1,2-diacyl-sn-glyceryl-L-cysteinyl-[lipoprotein] + a glycerophospholipid = N-acyl-S-1,2-diacyl-sn-glyceryl-L-cysteinyl-[lipoprotein] + a 2-acyl-sn-glycero-3-phospholipid + H(+). It functions in the pathway protein modification; lipoprotein biosynthesis (N-acyl transfer). Functionally, catalyzes the phospholipid dependent N-acylation of the N-terminal cysteine of apolipoprotein, the last step in lipoprotein maturation. This chain is Apolipoprotein N-acyltransferase, found in Vibrio parahaemolyticus serotype O3:K6 (strain RIMD 2210633).